Reading from the N-terminus, the 403-residue chain is Argininosuccinate synthase (403 aa).

ATP is bound at residue 9 to 17 (AYSGGLDTS). Residue Tyr86 coordinates L-citrulline. Gly116 is a binding site for ATP. Residues Thr118, Asn122, and Asp123 each contribute to the L-aspartate site. Asn122 contributes to the L-citrulline binding site. Residues Arg126, Ser174, Ser183, Glu259, and Tyr271 each contribute to the L-citrulline site.

The protein belongs to the argininosuccinate synthase family. Type 1 subfamily. In terms of assembly, homotetramer.

Its subcellular location is the cytoplasm. The catalysed reaction is L-citrulline + L-aspartate + ATP = 2-(N(omega)-L-arginino)succinate + AMP + diphosphate + H(+). The protein operates within amino-acid biosynthesis; L-arginine biosynthesis; L-arginine from L-ornithine and carbamoyl phosphate: step 2/3. The polypeptide is Argininosuccinate synthase (Shouchella clausii (strain KSM-K16) (Alkalihalobacillus clausii)).